We begin with the raw amino-acid sequence, 741 residues long: Subtilisin-like protease SBT4.4 (741 aa).

Positions 1–24 (MAKGTTFIFLFSSLLVLSLSSVSA) are cleaved as a signal peptide. A propeptide spans 25–112 (DKDDHGDQQV…VFPSRKLKLQ (88 aa)) (activation peptide). The 78-residue stretch at 34 to 111 (VYIVYLGSLP…SVFPSRKLKL (78 aa)) folds into the Inhibitor I9 domain. Positions 116–589 (SWNFMGLKEG…SGHVDPIDAI (474 aa)) constitute a Peptidase S8 domain. Catalysis depends on Asp144, which acts as the Charge relay system. N-linked (GlcNAc...) asparagine glycosylation is found at Asn175 and Asn195. His204 acts as the Charge relay system in catalysis. N-linked (GlcNAc...) asparagine glycans are attached at residues Asn227 and Asn357. One can recognise a PA domain in the interval 359–445 (TNYPLVYGKS…LSNDDYKSLV (87 aa)). The N-linked (GlcNAc...) asparagine glycan is linked to Asn449. Catalysis depends on Ser528, which acts as the Charge relay system. N-linked (GlcNAc...) asparagine glycans are attached at residues Asn565, Asn610, Asn623, and Asn654.

The protein belongs to the peptidase S8 family. The C-terminal propeptide is autocleaved.

It is found in the secreted. The protein is Subtilisin-like protease SBT4.4 of Arabidopsis thaliana (Mouse-ear cress).